The following is a 250-amino-acid chain: MAVTKLVLVRHGESQWNKENRFTGWYDVDLSEKGVSEAKAAGKLLKEEGYSFDFAYTSVLKRAIHTLWNVLDELDQAWLPVEKSWKLNERHYGALQGLNKAETAEKYGDEQVKQWRRGFAVTPPELTKDDERYPGHDPRYAKLSEKELPLTESLALTIDRVIPYWNETILPRMKSGERVIIAAHGNSLRALVKYLDNMSEEEILELNIPTGVPLVYEFDENFKPLKRYYLGNADEIAAKAAAVANQGKAK.

Substrate-binding positions include 10–17 (RHGESQWN), 23–24 (TG), R62, 89–92 (ERHY), K100, 116–117 (RR), and 185–186 (GN). H11 acts as the Tele-phosphohistidine intermediate in catalysis. The active-site Proton donor/acceptor is E89.

The protein belongs to the phosphoglycerate mutase family. BPG-dependent PGAM subfamily. In terms of assembly, homodimer.

It carries out the reaction (2R)-2-phosphoglycerate = (2R)-3-phosphoglycerate. The protein operates within carbohydrate degradation; glycolysis; pyruvate from D-glyceraldehyde 3-phosphate: step 3/5. Functionally, catalyzes the interconversion of 2-phosphoglycerate and 3-phosphoglycerate. This Shigella boydii serotype 4 (strain Sb227) protein is 2,3-bisphosphoglycerate-dependent phosphoglycerate mutase.